A 749-amino-acid chain; its full sequence is 5-methyltetrahydropteroyltriglutamate--homocysteine methyltransferase (749 aa).

5-methyltetrahydropteroyltri-L-glutamate contacts are provided by residues 15–18 and Lys114; that span reads RELK. Residues 425 to 427 and Glu478 contribute to the L-homocysteine site; that span reads IGS. L-methionine-binding positions include 425–427 and Glu478; that span reads IGS. Residue Trp555 coordinates 5-methyltetrahydropteroyltri-L-glutamate. Residue Asp593 coordinates L-homocysteine. Asp593 serves as a coordination point for L-methionine. Glu599 provides a ligand contact to 5-methyltetrahydropteroyltri-L-glutamate. His636, Cys638, and Glu660 together coordinate Zn(2+). The Proton donor role is filled by His689. Cys721 contributes to the Zn(2+) binding site.

This sequence belongs to the vitamin-B12 independent methionine synthase family. Zn(2+) is required as a cofactor.

It catalyses the reaction 5-methyltetrahydropteroyltri-L-glutamate + L-homocysteine = tetrahydropteroyltri-L-glutamate + L-methionine. Its pathway is amino-acid biosynthesis; L-methionine biosynthesis via de novo pathway; L-methionine from L-homocysteine (MetE route): step 1/1. In terms of biological role, catalyzes the transfer of a methyl group from 5-methyltetrahydrofolate to homocysteine resulting in methionine formation. This is 5-methyltetrahydropteroyltriglutamate--homocysteine methyltransferase from Streptococcus thermophilus (strain ATCC BAA-491 / LMD-9).